A 368-amino-acid chain; its full sequence is WD repeat-containing protein wdr-5.1 (368 aa).

The tract at residues 1-64 (MDPAQNQPNT…APTTSQESTI (64 aa)) is disordered. Positions 16-42 (PAVEEAQGVNNSEAEAPAPAALSSVSP) are enriched in low complexity. WD repeat units lie at residues 77-116 (GHTKSISAVKFSPCGKFLGTSSADKTVKIWNMSDLSCERT), 119-158 (GHKLGVNDFAWSADSKSIVTASDDKTLKIYEVPTVKMAKT), 161-200 (GHTNYVFCCNFNPQSSLVVSGSFDESVRIWDVRTGMCVKT), 203-242 (AHSDPVSAVSFNRDGSLITSGSYDGLVRIWDTANGQCVKT), 246-285 (DENPPVAFVKFSPNGKYILSSNLDNTLKLWDFGKGKTLKQ), 288-330 (GHEN…VVQS), and 333-368 (GHTQAVIASDCHPMQNMIASGALEPDNTIRIWRSDS).

The chain is WD repeat-containing protein wdr-5.1 from Caenorhabditis briggsae.